Here is a 1113-residue protein sequence, read N- to C-terminus: StAR-related lipid transfer protein 13 (1113 aa).

An N-acetylmethionine modification is found at Met-1. One can recognise an SAM domain in the interval 55 to 122 (QQEIEAKEAC…LNKCASMKLD (68 aa)). Disordered stretches follow at residues 162-254 (LLPR…PTRA) and 307-346 (PNGD…VSTP). Residues 177 to 188 (MRNTTSSESVLT) are compositionally biased toward polar residues. Low complexity-rich tracts occupy residues 197–213 (SIHS…SQPG) and 326–344 (SGKS…SGVS). Position 411 is a phosphoserine (Ser-411). Positions 536-549 (FEGNSVSEGRTTPS) are enriched in polar residues. Residues 536-580 (FEGNSVSEGRTTPSDVERDVTSLNESEPPGVRDRRDSGVGASLTR) are disordered. In terms of domain architecture, Rho-GAP spans 663–868 (VPLIVHVQRT…HMIMECDRLF (206 aa)). The START domain maps to 899–1107 (LEESGATFHT…RNSFQPLIAE (209 aa)).

In terms of assembly, homodimer. Interacts with TAX1BP1. As to expression, ubiquitously expressed. Underexpressed in hepatocellular carcinoma cells and some breast cancer cell lines.

The protein resides in the cytoplasm. The protein localises to the membrane. It is found in the mitochondrion membrane. It localises to the lipid droplet. Functionally, GTPase-activating protein for RhoA, and perhaps for Cdc42. May be involved in regulation of cytoskeletal reorganization, cell proliferation and cell motility. Acts a tumor suppressor in hepatocellular carcinoma cells. The sequence is that of StAR-related lipid transfer protein 13 (STARD13) from Homo sapiens (Human).